We begin with the raw amino-acid sequence, 412 residues long: Tryptophan synthase beta chain (412 aa).

The residue at position 105 (K105) is an N6-(pyridoxal phosphate)lysine.

The protein belongs to the TrpB family. Tetramer of two alpha and two beta chains. Pyridoxal 5'-phosphate serves as cofactor.

The enzyme catalyses (1S,2R)-1-C-(indol-3-yl)glycerol 3-phosphate + L-serine = D-glyceraldehyde 3-phosphate + L-tryptophan + H2O. The protein operates within amino-acid biosynthesis; L-tryptophan biosynthesis; L-tryptophan from chorismate: step 5/5. Its function is as follows. The beta subunit is responsible for the synthesis of L-tryptophan from indole and L-serine. The chain is Tryptophan synthase beta chain (trpB) from Synechocystis sp. (strain ATCC 27184 / PCC 6803 / Kazusa).